The primary structure comprises 187 residues: Intraflagellar transport protein 22 homolog (187 aa).

Residues 10 to 17, 65 to 69, and 125 to 128 contribute to the GTP site; these read GPSECGKT, DCAGD, and HKPG.

The protein belongs to the small GTPase superfamily. Rab family.

In Danio rerio (Zebrafish), this protein is Intraflagellar transport protein 22 homolog (ift22).